The chain runs to 119 residues: Myohemerythrin-1 (119 aa).

The Fe cation site is built by His-25, His-55, Asn-58, Glu-59, His-74, His-78, His-107, and Asp-112.

It belongs to the hemerythrin family. In terms of assembly, monomer. Muscle.

Myohemerythrin is an oxygen-binding protein found in the retractor muscles of certain worms. The oxygen-binding site contains two iron atoms. The sequence is that of Myohemerythrin-1 from Phascolopsis gouldii (Peanut worm).